A 256-amino-acid polypeptide reads, in one-letter code: Proteasome subunit alpha (256 aa).

The interval 235–256 is disordered; it reads ELDSNGSDGNGDAPELNGGSSD.

Belongs to the peptidase T1A family. As to quaternary structure, the 20S proteasome core is composed of 14 alpha and 14 beta subunits that assemble into four stacked heptameric rings, resulting in a barrel-shaped structure. The two inner rings, each composed of seven catalytic beta subunits, are sandwiched by two outer rings, each composed of seven alpha subunits. The catalytic chamber with the active sites is on the inside of the barrel. Has a gated structure, the ends of the cylinder being occluded by the N-termini of the alpha-subunits. Is capped by the proteasome-associated ATPase, ARC.

The protein localises to the cytoplasm. Its pathway is protein degradation; proteasomal Pup-dependent pathway. Its activity is regulated as follows. The formation of the proteasomal ATPase ARC-20S proteasome complex, likely via the docking of the C-termini of ARC into the intersubunit pockets in the alpha-rings, may trigger opening of the gate for substrate entry. Interconversion between the open-gate and close-gate conformations leads to a dynamic regulation of the 20S proteasome proteolysis activity. Its function is as follows. Component of the proteasome core, a large protease complex with broad specificity involved in protein degradation. This is Proteasome subunit alpha from Mycolicibacterium paratuberculosis (strain ATCC BAA-968 / K-10) (Mycobacterium paratuberculosis).